The chain runs to 337 residues: Alcohol dehydrogenase (337 aa).

Zn(2+) is bound by residues Cys38, His61, Cys92, Cys95, Cys98, Cys106, and Cys148. NAD(+) is bound by residues 172–177 (GIGGLG), Asp195, Lys200, 260–262 (VGL), and Arg331.

This sequence belongs to the zinc-containing alcohol dehydrogenase family. Requires Zn(2+) as cofactor.

The enzyme catalyses a primary alcohol + NAD(+) = an aldehyde + NADH + H(+). The catalysed reaction is a secondary alcohol + NAD(+) = a ketone + NADH + H(+). Substrate inhibition is not observed with any alcohols, and the enzyme-NADH dissociation is not considered to be a rate-limiting step. Functionally, NAD(+)-dependent alcohol dehydrogenase. This Geobacillus stearothermophilus (Bacillus stearothermophilus) protein is Alcohol dehydrogenase (adhT).